A 363-amino-acid chain; its full sequence is Diheme-cytochrome-encapsulin shell fusion protein (363 aa).

The signal sequence occupies residues 1 to 36 (MVMGILNTFKKVYAVTGFFALLAVFSLSQVGSSAFA). The interval 37–74 (ACAKVDDCFSCHTTQELNAVHKNTPYQGQSCIVCHKAF) is diheme c-type cytochrome. Positions 44, 47, 48, 67, 70, and 71 each coordinate heme. The interval 75–94 (AADDTCSDAKDGRFAKISSE) is linker. Residues 95–363 (ININKEDWNK…KCPQAICTLE (269 aa)) form an encapsulin domain region.

This sequence belongs to the encapsulin family. Family 1 subfamily. In terms of assembly, the encapsulin nanocompartment is probably formed by 180 monomers, with the N-terminus (diheme domain) inside. There are 36 pores where the pentamers meet as well as 3-fold axis channels and dimer channels. It depends on heme as a cofactor.

It is found in the encapsulin nanocompartment. Fusion of the shell and cargo protein of a type 1 encapsulin nanocompartment. Protein missing its signal peptide makes 33 nm particles in E.coli (called cEnc), protein missing its signal peptide and diheme domain (residues 1-86, called Enc) makes 29 nm particles. The cEnc nancompartment encloses c-type heme. The cargo protein NIR-HAO (AC P0DV45) is probably targeted to the nanocompartment by its association with the diheme domain in cEnc; removal of the diheme domain in Enc halves the amount of cargo. This Kuenenia stuttgartiensis protein is Diheme-cytochrome-encapsulin shell fusion protein.